An 817-amino-acid polypeptide reads, in one-letter code: ABC transporter G family member STR (817 aa).

The interval M1–N30 is disordered. At M1 to P542 the chain is on the cytoplasmic side. The region spanning L43–D294 is the ABC transporter domain. G87–S94 contacts ATP. 3 disordered regions span residues Q321–T349, G362–R395, and R439–S463. Over residues G362–F375 the composition is skewed to polar residues. Over residues L377–F388 the composition is skewed to acidic residues. The chain crosses the membrane as a helical span at residues E543–F563. The Extracellular segment spans residues K564–N579. Residues F580–I600 traverse the membrane as a helical segment. Residues M601 to V621 lie on the Cytoplasmic side of the membrane. Residues I622 to I642 traverse the membrane as a helical segment. Over T643–W657 the chain is Extracellular. The chain crosses the membrane as a helical span at residues M658–V678. The Cytoplasmic segment spans residues P679 to Y681. A helical membrane pass occupies residues I682 to F702. At L703–W787 the chain is on the extracellular side. A glycan (N-linked (GlcNAc...) asparagine) is linked at N762. Residues Y788 to L808 traverse the membrane as a helical segment. The Cytoplasmic portion of the chain corresponds to R809–K817.

It belongs to the ABC transporter superfamily. ABCG family. Stunted arbuscule (STR) subfamily. As to quaternary structure, heterodimerizes with STR2; the resulting transporter is located in the peri-arbuscular membrane. Expressed constitutively in the vascular tissue of roots.

It localises to the cell membrane. Functionally, together with STR2, required for arbuscule development in arbuscular mycorrhizal (AM) symbiosis. The protein is ABC transporter G family member STR of Medicago truncatula (Barrel medic).